Consider the following 95-residue polypeptide: MNIRPLHDRVIVRRTQEEKTTESGLIIPDSATEKPSKGEILAIGNGKINDNGDVIALDVKVGDQVLFGQYAGNEIKVDGETLLVVREDDIVAIIE.

This sequence belongs to the GroES chaperonin family. Heptamer of 7 subunits arranged in a ring. Interacts with the chaperonin GroEL.

Its subcellular location is the cytoplasm. Together with the chaperonin GroEL, plays an essential role in assisting protein folding. The GroEL-GroES system forms a nano-cage that allows encapsulation of the non-native substrate proteins and provides a physical environment optimized to promote and accelerate protein folding. GroES binds to the apical surface of the GroEL ring, thereby capping the opening of the GroEL channel. The chain is Co-chaperonin GroES from Ruthia magnifica subsp. Calyptogena magnifica.